The primary structure comprises 336 residues: Foldase protein PrsA (336 aa).

Residues M1 to A22 form the signal peptide. C23 is lipidated: N-palmitoyl cysteine. C23 is lipidated: S-diacylglycerol cysteine. The PpiC domain occupies P194 to S286.

The protein belongs to the PrsA family.

It is found in the cell membrane. The enzyme catalyses [protein]-peptidylproline (omega=180) = [protein]-peptidylproline (omega=0). Functionally, plays a major role in protein secretion by helping the post-translocational extracellular folding of several secreted proteins. The sequence is that of Foldase protein PrsA from Clostridium botulinum (strain 657 / Type Ba4).